A 145-amino-acid polypeptide reads, in one-letter code: D-aminoacyl-tRNA deacylase (145 aa).

A Gly-cisPro motif, important for rejection of L-amino acids motif is present at residues 137 to 138 (GP).

This sequence belongs to the DTD family. Homodimer.

It localises to the cytoplasm. The catalysed reaction is glycyl-tRNA(Ala) + H2O = tRNA(Ala) + glycine + H(+). It catalyses the reaction a D-aminoacyl-tRNA + H2O = a tRNA + a D-alpha-amino acid + H(+). Functionally, an aminoacyl-tRNA editing enzyme that deacylates mischarged D-aminoacyl-tRNAs. Also deacylates mischarged glycyl-tRNA(Ala), protecting cells against glycine mischarging by AlaRS. Acts via tRNA-based rather than protein-based catalysis; rejects L-amino acids rather than detecting D-amino acids in the active site. By recycling D-aminoacyl-tRNA to D-amino acids and free tRNA molecules, this enzyme counteracts the toxicity associated with the formation of D-aminoacyl-tRNA entities in vivo and helps enforce protein L-homochirality. The chain is D-aminoacyl-tRNA deacylase from Proteus mirabilis (strain HI4320).